Here is a 626-residue protein sequence, read N- to C-terminus: Acetolactate synthase large subunit (626 aa).

Residues Met-1–Thr-13 show a composition bias toward polar residues. The tract at residues Met-1–Pro-23 is disordered. Glu-73 provides a ligand contact to thiamine diphosphate. FAD contacts are provided by residues Arg-175, His-281–Arg-302, and Asp-324–Asp-343. The thiamine pyrophosphate binding stretch occupies residues Gln-416–Asn-496. The Mg(2+) site is built by Asp-467 and Asn-494.

The protein belongs to the TPP enzyme family. Dimer of large and small chains. Mg(2+) is required as a cofactor. The cofactor is thiamine diphosphate.

It catalyses the reaction 2 pyruvate + H(+) = (2S)-2-acetolactate + CO2. It functions in the pathway amino-acid biosynthesis; L-isoleucine biosynthesis; L-isoleucine from 2-oxobutanoate: step 1/4. It participates in amino-acid biosynthesis; L-valine biosynthesis; L-valine from pyruvate: step 1/4. This Corynebacterium glutamicum (strain ATCC 13032 / DSM 20300 / JCM 1318 / BCRC 11384 / CCUG 27702 / LMG 3730 / NBRC 12168 / NCIMB 10025 / NRRL B-2784 / 534) protein is Acetolactate synthase large subunit (ilvB).